A 523-amino-acid polypeptide reads, in one-letter code: Apoptosis inhibitor 5 (523 aa).

The ARM-like and Heat-like helical repeats stretch occupies residues 1 to 360 (MPTVEELYRN…HQLGRKLPDF (360 aa)). Residues 446-523 (VQKADANQKR…RGNRSRGRIY (78 aa)) are disordered. A Nuclear localization signal motif is present at residues 454 to 475 (KRTSEDTTSSSPPKKASAGPKR). Residues 460–471 (TTSSSPPKKASA) show a composition bias toward low complexity. Residues 487–497 (KYSSNLGSFSY) are compositionally biased toward polar residues. Over residues 502–515 (GFRGGRGRGWGGRG) the composition is skewed to gly residues.

This sequence belongs to the API5 family. As to quaternary structure, monomer.

The protein localises to the nucleus. The protein resides in the cytoplasm. Functionally, antiapoptotic factor that may have a role in protein assembly. This is Apoptosis inhibitor 5 (API5) from Gallus gallus (Chicken).